A 211-amino-acid polypeptide reads, in one-letter code: Beta-crystallin B3 (211 aa).

Methionine 1 bears the N-acetylmethionine mark. Alanine 2 bears the N-acetylalanine; in Beta-crystallin B3, N-terminally processed mark. Positions 2–23 (AEQHGAPEQAAAGKSHGGLGGS) are N-terminal arm. Beta/gamma crystallin 'Greek key' domains follow at residues 24 to 63 (YKVT…QVES) and 64 to 108 (GPWL…RPLH). The interval 109–113 (IDGPD) is connecting peptide. Beta/gamma crystallin 'Greek key' domains follow at residues 114–155 (HKLH…RVIN) and 156–198 (GTWV…RRIR). The tract at residues 200–211 (QKWHKRGCFLSS) is C-terminal arm.

Belongs to the beta/gamma-crystallin family. As to quaternary structure, homo/heterodimer, or complexes of higher-order. The structure of beta-crystallin oligomers seems to be stabilized through interactions between the N-terminal arms.

In terms of biological role, crystallins are the dominant structural components of the vertebrate eye lens. The protein is Beta-crystallin B3 (Crybb3) of Mus musculus (Mouse).